A 521-amino-acid polypeptide reads, in one-letter code: Apolipoprotein N-acyltransferase (521 aa).

Helical transmembrane passes span valine 27 to alanine 47, leucine 64 to valine 84, isoleucine 93 to valine 113, isoleucine 125 to leucine 145, isoleucine 167 to leucine 187, and tyrosine 202 to phenylalanine 222. The CN hydrolase domain occupies isoleucine 239–leucine 483. Glutamate 281 acts as the Proton acceptor in catalysis. The active site involves lysine 344. Cysteine 394 functions as the Nucleophile in the catalytic mechanism. Residues tyrosine 493–phenylalanine 513 traverse the membrane as a helical segment.

Belongs to the CN hydrolase family. Apolipoprotein N-acyltransferase subfamily.

The protein localises to the cell inner membrane. It carries out the reaction N-terminal S-1,2-diacyl-sn-glyceryl-L-cysteinyl-[lipoprotein] + a glycerophospholipid = N-acyl-S-1,2-diacyl-sn-glyceryl-L-cysteinyl-[lipoprotein] + a 2-acyl-sn-glycero-3-phospholipid + H(+). It participates in protein modification; lipoprotein biosynthesis (N-acyl transfer). Its function is as follows. Catalyzes the phospholipid dependent N-acylation of the N-terminal cysteine of apolipoprotein, the last step in lipoprotein maturation. This chain is Apolipoprotein N-acyltransferase, found in Geobacter metallireducens (strain ATCC 53774 / DSM 7210 / GS-15).